Consider the following 244-residue polypeptide: Claudin-12 (244 aa).

The Cytoplasmic portion of the chain corresponds to 1–10 (MGCRDVHAAT). The chain crosses the membrane as a helical span at residues 11 to 31 (VLSFLCGIASVAGLFAGTLLP). The Extracellular portion of the chain corresponds to 32 to 87 (NWRKLRLITFNRNEKNLTIYTGLWVKCARYDGSSDCLMYDRTWYLSVDQLDLRVLQ). Residues 88–108 (FALPLSIVIAMGALLLCLIGM) form a helical membrane-spanning segment. Topologically, residues 109–135 (CNTAFNSSVPNIKLAKCLVNSAGCHLV) are cytoplasmic. The helical transmembrane segment at 136–156 (AGLLFFLAGTVSLSPSIWAIF) threads the bilayer. Residues 157 to 174 (YNSHLNRKFEPVFTFDYA) lie on the Extracellular side of the membrane. The helical transmembrane segment at 175 to 195 (VFVTIASSGGLFMTALLLFVW) threads the bilayer. Over 196–244 (YCACKSLSSPFWQPLYSHAPGMHTYSQPYSSRSRLSAIEIDIPVVSHST) the chain is Cytoplasmic. S228 and S231 each carry phosphoserine.

It belongs to the claudin family. As to quaternary structure, interacts with OCLN.

It localises to the cell junction. Its subcellular location is the tight junction. The protein resides in the cell membrane. Its function is as follows. Plays a major role in tight junction-specific obliteration of the intercellular space, through calcium-independent cell-adhesion activity. The polypeptide is Claudin-12 (Cldn12) (Mus musculus (Mouse)).